Here is a 287-residue protein sequence, read N- to C-terminus: MKSFMHSKAVIFSFTMAFFLILAACSGKNEADSKDTGWEQIKDKGKIVVATSGTLYPTSYHDTDSGSDKLTGYEVEVVREAAKRLGLKVEFKEMGIDGMLTAVNSGQVDAAANDIDVTKDREEKFAFSTPYKYSYGTAIVRKDDLSGIKTLKDLKGKKAAGAATTVYMEVARKYGAKEVIYDNATNEQYLKDVANGRTDVILNDYYLQTLALAAFPDLNITIHPDIKYMPNKQALVMKKSNAALQKKMNEALKEMSKDGSLTKLSKQFFNKADVSKKIDADVQDVDL.

Residues 1 to 24 form the signal peptide; it reads MKSFMHSKAVIFSFTMAFFLILAA. A lipid anchor (N-palmitoyl cysteine) is attached at C25. C25 is lipidated: S-diacylglycerol cysteine.

Belongs to the bacterial solute-binding protein 3 family.

It is found in the cell membrane. Probably part of a binding-protein-dependent transport system. In Bacillus subtilis (strain 168), this protein is Probable ABC transporter extracellular-binding protein YckB (yckB).